The following is a 1280-amino-acid chain: Pullulanase A (1280 aa).

The signal sequence occupies residues 1-44 (MRKTPSHTEKKMVYSIRSLKNGTGSVLIGASLVLLAMATPTISS). The segment at 42–132 (ISSDESTPTT…VTTETKAEEP (91 aa)) is disordered. Positions 48–61 (TPTTNEPNNRNTTT) are enriched in low complexity. The segment covering 79–90 (DISSPGNANASL) has biased composition (polar residues). Residues 115 to 126 (EPTTSTSPVTTE) are compositionally biased toward low complexity. Substrate is bound by residues 156–158 (WTW), W168, D214, 263–265 (WYW), W276, K318, and N323. Ca(2+)-binding residues include S661 and Y663. Substrate is bound by residues 667-668 (YD) and F743. D778 serves as the catalytic Nucleophile. The active-site Proton donor is the E807. Residue W809 participates in substrate binding. Ca(2+) contacts are provided by M828, T831, and D832. Substrate-binding residues include D839, R842, and Y849. Residues D882 and D886 each contribute to the Ca(2+) site. Substrate is bound by residues N896, K969, and 989-991 (DSY). Position 992 (D992) interacts with Ca(2+). The disordered stretch occupies residues 1140-1248 (VSQNGTSHES…TPDKQAELPN (109 aa)). Residues 1149–1196 (STAEEKPDSTPSKPEHQNEASHPAHQDPAPEARPDSTKPDAKVADAEN) show a composition bias toward basic and acidic residues. A compositionally biased stretch (low complexity) spans 1205 to 1218 (SQAEQPAQEAQASS). Residues 1246-1250 (LPNTG) carry the LPXTG sorting signal motif. T1249 is subject to Pentaglycyl murein peptidoglycan amidated threonine. The propeptide at 1250-1280 (GIKNENKLLFAGISLLALLGLGFLLKNKKEN) is removed by sortase.

It belongs to the glycosyl hydrolase 13 family.

Its subcellular location is the secreted. The protein localises to the cell wall. The protein resides in the cell surface. The catalysed reaction is Hydrolysis of (1-&gt;6)-alpha-D-glucosidic linkages in pullulan, amylopectin and glycogen, and in the alpha- and beta-limit dextrins of amylopectin and glycogen.. Its activity is regulated as follows. Inhibited by 4-O-alpha-D-glucopyranosylmoranoline (G1M). Virulence factor. Involved in the degradation of glycogen of the mammalian host cells. Hydrolyzes the alpha-1,6-branchpoints of glycogen. Hydrolyzes pullulan. Does not hydrolyze dextran. Binds to mouse lung alveolar type II cells that are rich in glycogen stores. Is an alpha-glucan-specific carbohydrate-binding protein, which binds to amylose (pure alpha-(1,4)-linked glucose), amylopectin (alpha-(1,4)-linked glucose with alpha-(1,6) branch points), pullulan (linear polymer of mixed alpha-(1,4)- and alpha-(1,6)-linked glucose) and glycogen (similar to amylopectin with more frequent alpha-(1,6) branch points) in vitro. Does not bind to dextran (a linear polymer of alpha-(1,6)-linked glucose). The protein is Pullulanase A of Streptococcus pneumoniae serotype 4 (strain ATCC BAA-334 / TIGR4).